Reading from the N-terminus, the 109-residue chain is Nucleoid-associated protein VP2178 (109 aa).

Disordered regions lie at residues 1–22 and 88–109; these read MFGK…ERMQ and QKEK…KMPF.

It belongs to the YbaB/EbfC family. Homodimer.

It localises to the cytoplasm. The protein resides in the nucleoid. Its function is as follows. Binds to DNA and alters its conformation. May be involved in regulation of gene expression, nucleoid organization and DNA protection. In Vibrio parahaemolyticus serotype O3:K6 (strain RIMD 2210633), this protein is Nucleoid-associated protein VP2178.